The primary structure comprises 215 residues: 3-isopropylmalate dehydratase small subunit (215 aa).

It belongs to the LeuD family. LeuD type 1 subfamily. As to quaternary structure, heterodimer of LeuC and LeuD.

It catalyses the reaction (2R,3S)-3-isopropylmalate = (2S)-2-isopropylmalate. It functions in the pathway amino-acid biosynthesis; L-leucine biosynthesis; L-leucine from 3-methyl-2-oxobutanoate: step 2/4. In terms of biological role, catalyzes the isomerization between 2-isopropylmalate and 3-isopropylmalate, via the formation of 2-isopropylmaleate. The sequence is that of 3-isopropylmalate dehydratase small subunit from Polynucleobacter necessarius subsp. necessarius (strain STIR1).